We begin with the raw amino-acid sequence, 138 residues long: ATP synthase epsilon chain (138 aa).

It belongs to the ATPase epsilon chain family. As to quaternary structure, F-type ATPases have 2 components, CF(1) - the catalytic core - and CF(0) - the membrane proton channel. CF(1) has five subunits: alpha(3), beta(3), gamma(1), delta(1), epsilon(1). CF(0) has three main subunits: a, b and c.

The protein resides in the cell inner membrane. Its function is as follows. Produces ATP from ADP in the presence of a proton gradient across the membrane. In Endomicrobium trichonymphae, this protein is ATP synthase epsilon chain.